The chain runs to 943 residues: Synaptotagmin-like protein 2 (943 aa).

Positions 1–57 (MIDLSFLTEEEQEAIMKVLQRDAALKRAEEERVRHLPEKVKDDQQLKNMSGQWFYEA) constitute a RabBD domain. Disordered stretches follow at residues 77–99 (RKKR…KESW), 118–291 (EEPE…VRFH), and 361–613 (ESDR…SNSG). Over residues 82–99 (QVADEQSKDRANRAKESW) the composition is skewed to basic and acidic residues. Over residues 125–138 (APASPSSSVVNPVS) the composition is skewed to low complexity. The span at 174 to 192 (SQQTKNEQSKNGKTGLFQT) shows a compositional bias: polar residues. Basic and acidic residues predominate over residues 194 to 205 (KEGELSESKEES). Composition is skewed to polar residues over residues 382-394 (PQPS…LPFQ), 404-416 (KNET…SGSF), and 426-440 (EFLT…NSHT). Residues 524–537 (ELVRSAEDDQKADQ) show a composition bias toward basic and acidic residues. A compositionally biased stretch (polar residues) spans 549–560 (STVSSQPDNQFS). Positions 603 to 613 (SSLTNLSSNSG) are enriched in low complexity. C2 domains are found at residues 637-762 (VKGS…LKWY) and 777-906 (NRGE…VDWM).

As to quaternary structure, monomer. Binds NRXN1. Binds RAB27A that has been activated by GTP-binding via its N-terminus. Interacts with RAB27B.

The protein resides in the cell membrane. Its function is as follows. May act as a RAB27A effector protein and play a role in cytotoxic granule exocytosis in lymphocytes. This Bos taurus (Bovine) protein is Synaptotagmin-like protein 2 (SYTL2).